The primary structure comprises 800 residues: General transcription and DNA repair factor IIH helicase/translocase subunit XPB (800 aa).

The tract at residues 1–27 (MSSGDSNLKRRRGGNTGQSSKSYNTWT) is disordered. A compositionally biased stretch (polar residues) spans 17 to 27 (GQSSKSYNTWT). The Helicase ATP-binding domain maps to 329 to 491 (MFGNGRARSG…DLNFLIGPKL (163 aa)). Residue 342-349 (LPCGAGKS) participates in ATP binding. Residues 444-447 (DEVH) carry the DEVH box motif. Residues 546–704 (RACEYLIRFH…ELPGIDQEVN (159 aa)) enclose the Helicase C-terminal domain. A disordered region spans residues 743–769 (GAKKSKSSAPTVSRTTGGSTRALSGGN). Positions 749 to 764 (SSAPTVSRTTGGSTRA) are enriched in polar residues.

Belongs to the helicase family. RAD25/XPB subfamily. In terms of assembly, component of the 7-subunit TFIIH core complex composed of XPB/repB, XPD/repD, gtf2h1, gtf2h2, gtf2h3, gtf2h4 and gtf2h5, which is active in NER. The core complex associates with the 3-subunit CDK-activating kinase (CAK) module composed of cycH/cyclin H, cdk7 and mnat1 to form the 10-subunit holoenzyme (holo-TFIIH) active in transcription.

Its subcellular location is the nucleus. It catalyses the reaction Couples ATP hydrolysis with the unwinding of duplex DNA by translocating in the 3'-5' direction.. The enzyme catalyses ATP + H2O = ADP + phosphate + H(+). ATP-dependent 3'-5' DNA helicase/translocase; binds dsDNA rather than ssDNA, unzipping it in a translocase rather than classical helicase activity. Component of the general transcription and DNA repair factor IIH (TFIIH) core complex. When complexed to CDK-activating kinase (CAK), involved in RNA transcription by RNA polymerase II. The ATPase activity of XPB/ERCC3, but not its helicase activity, is required for DNA opening; it may wrap around the damaged DNA wedging it open, causing localized melting and twisting that allows XPD/ERCC2 helicase to anchor. The ATP-dependent helicase activity of XPB/ERCC3 may be required for promoter escape. Also involved in transcription-coupled nucleotide excision repair (NER) of damaged DNA. In NER, TFIIH acts by opening DNA around the lesion to allow the excision of the damaged oligonucleotide and its replacement by a new DNA fragment. The structure of the TFIIH transcription complex differs from the NER-TFIIH complex. This is General transcription and DNA repair factor IIH helicase/translocase subunit XPB from Dictyostelium discoideum (Social amoeba).